Reading from the N-terminus, the 262-residue chain is MLARVGTTLFFLANALAAYAVSVTSPTRDTTWQSGQVNTVTWSSVSTDPEEMVIMLVNNAHYPNQNFNLGTVQSSAGSLDTDISISSDLPTDGWQIYFNGATSQNQGSLAQSEQFDFEGSDSTLAASTISGGIYSSTSASSTSSSTATPSSSSTTSSSSSSSSSTPISSSITSSISSSASSSVSSSSASSSGSISSADAKTVSASSNSTISGFSTSTTSASSSAAGNSSSSSYTSYSGAVSNGVAQLSVAACMGIAALMLIA.

Residues 1-20 (MLARVGTTLFFLANALAAYA) form the signal peptide. Disordered stretches follow at residues 136-165 (STSA…SSST) and 175-194 (ISSS…SGSI). N-linked (GlcNAc...) asparagine glycosylation is found at N207 and N227. The GPI-like-anchor amidated asparagine moiety is linked to residue N242. Positions 243–262 (GVAQLSVAACMGIAALMLIA) are cleaved as a propeptide — removed in mature form.

The protein belongs to the UPF0619 family.

The protein localises to the golgi apparatus membrane. It localises to the cell membrane. This chain is UPF0619 GPI-anchored membrane protein C1322.10, found in Schizosaccharomyces pombe (strain 972 / ATCC 24843) (Fission yeast).